The primary structure comprises 281 residues: NADPH-dependent 7-cyano-7-deazaguanine reductase (281 aa).

Residue 88–90 (IES) coordinates substrate. Position 90–91 (90–91 (SK)) interacts with NADPH. Catalysis depends on Cys-189, which acts as the Thioimide intermediate. The Proton donor role is filled by Asp-196. 228 to 229 (HE) serves as a coordination point for substrate. Residue 257–258 (RG) participates in NADPH binding.

It belongs to the GTP cyclohydrolase I family. QueF type 2 subfamily. As to quaternary structure, homodimer.

The protein localises to the cytoplasm. The enzyme catalyses 7-aminomethyl-7-carbaguanine + 2 NADP(+) = 7-cyano-7-deazaguanine + 2 NADPH + 3 H(+). Its pathway is tRNA modification; tRNA-queuosine biosynthesis. Catalyzes the NADPH-dependent reduction of 7-cyano-7-deazaguanine (preQ0) to 7-aminomethyl-7-deazaguanine (preQ1). This Yersinia pestis bv. Antiqua (strain Antiqua) protein is NADPH-dependent 7-cyano-7-deazaguanine reductase.